The sequence spans 180 residues: Der GTPase-activating protein YihI (180 aa).

2 disordered regions span residues 1–88 (MTRK…KERR) and 147–180 (PEVTEEAPVRKGAKTDEDLLDQFENMDLDSFGKE). Composition is skewed to basic and acidic residues over residues 18 to 33 (FREKSTTQVDVEARKS), 50 to 67 (EALDPKHYANGQKKDPRL), 77 to 88 (VEKKPTTKKERR), and 153 to 163 (APVRKGAKTDE). Acidic residues predominate over residues 164–173 (DLLDQFENMD).

This sequence belongs to the YihI family. Interacts with Der.

A GTPase-activating protein (GAP) that modifies Der/EngA GTPase function. May play a role in ribosome biogenesis. The chain is Der GTPase-activating protein YihI from Photobacterium profundum (strain SS9).